The primary structure comprises 151 residues: Arginine repressor (151 aa).

This sequence belongs to the ArgR family.

The protein resides in the cytoplasm. Its pathway is amino-acid biosynthesis; L-arginine biosynthesis [regulation]. Its function is as follows. Regulates arginine biosynthesis genes. The polypeptide is Arginine repressor (Moorella thermoacetica (strain ATCC 39073 / JCM 9320)).